The sequence spans 53 residues: Small, acid-soluble spore protein K (53 aa).

Positions 1–53 (MRNKERNFPNQNNNKFEGEPRAKAEYASKRANGTTNTHPQERMHASGKRDDNF) are disordered. Composition is skewed to basic and acidic residues over residues 16-28 (FEGE…EYAS) and 39-53 (PQER…DDNF).

Belongs to the SspK family.

It localises to the spore core. In Geobacillus sp. (strain WCH70), this protein is Small, acid-soluble spore protein K.